Reading from the N-terminus, the 276-residue chain is Diaminopimelate epimerase (276 aa).

3 residues coordinate substrate: Asn-13, Gln-46, and Asn-66. Cys-75 serves as the catalytic Proton donor. Substrate is bound by residues 76–77 (GN), Asn-159, Asn-192, and 210–211 (ER). The active-site Proton acceptor is the Cys-219. 220-221 (GS) contacts substrate.

The protein belongs to the diaminopimelate epimerase family. As to quaternary structure, homodimer.

It is found in the cytoplasm. The catalysed reaction is (2S,6S)-2,6-diaminopimelate = meso-2,6-diaminopimelate. It participates in amino-acid biosynthesis; L-lysine biosynthesis via DAP pathway; DL-2,6-diaminopimelate from LL-2,6-diaminopimelate: step 1/1. Its function is as follows. Catalyzes the stereoinversion of LL-2,6-diaminopimelate (L,L-DAP) to meso-diaminopimelate (meso-DAP), a precursor of L-lysine and an essential component of the bacterial peptidoglycan. In Aliivibrio fischeri (strain ATCC 700601 / ES114) (Vibrio fischeri), this protein is Diaminopimelate epimerase.